The chain runs to 450 residues: Crh-like protein 4 (450 aa).

Residues 1-21 (MRLSLVGVAIGLLSSSAIVTA) form the signal peptide. An intrachain disulfide couples Cys27 to Cys34. Residues 46-228 (YDFTKGSSPD…WAGGETDYSA (183 aa)) enclose the GH16 domain. The Nucleophile role is filled by Glu119. Glu123 serves as the catalytic Proton donor. Residues Glu123, Lys201, Trp205, and Thr216 each coordinate chitin. Asn383 carries an N-linked (GlcNAc...) asparagine glycan.

This sequence belongs to the glycosyl hydrolase 16 family. CRH1 subfamily. Post-translationally, the GPI-like anchor contains a phosphoceramide lipid group. The anchor position has not been determined.

It localises to the cell membrane. It is found in the secreted. The protein localises to the cell wall. The catalysed reaction is Random endo-hydrolysis of N-acetyl-beta-D-glucosaminide (1-&gt;4)-beta-linkages in chitin and chitodextrins.. In terms of biological role, dual chitinase/transglycosylase that plays a role in cell wall architecture. Chitinase and transglycosylase activities are coupled. Required for the polysaccharide cross-linking at the septa and the cell wall. More specifically, transfers chitin to 1,6-beta-glucan in the cell wall. In Aspergillus fumigatus (strain ATCC MYA-4609 / CBS 101355 / FGSC A1100 / Af293) (Neosartorya fumigata), this protein is Crh-like protein 4.